A 444-amino-acid polypeptide reads, in one-letter code: uncharacterized protein (444 aa).

An N6-(pyridoxal phosphate)lysine modification is found at Lys268.

The protein belongs to the class-III pyridoxal-phosphate-dependent aminotransferase family. The cofactor is pyridoxal 5'-phosphate.

This is an uncharacterized protein from Bacillus subtilis (strain 168).